A 218-amino-acid chain; its full sequence is Thiamine-phosphate synthase (218 aa).

4-amino-2-methyl-5-(diphosphooxymethyl)pyrimidine contacts are provided by residues 43–47 (QLRMK) and asparagine 75. Mg(2+)-binding residues include aspartate 76 and aspartate 95. Threonine 114 lines the 4-amino-2-methyl-5-(diphosphooxymethyl)pyrimidine pocket. A 2-[(2R,5Z)-2-carboxy-4-methylthiazol-5(2H)-ylidene]ethyl phosphate-binding site is contributed by 140–142 (TST). Residue lysine 143 coordinates 4-amino-2-methyl-5-(diphosphooxymethyl)pyrimidine. Residues glycine 171 and 191–192 (VS) each bind 2-[(2R,5Z)-2-carboxy-4-methylthiazol-5(2H)-ylidene]ethyl phosphate.

It belongs to the thiamine-phosphate synthase family. Requires Mg(2+) as cofactor.

The catalysed reaction is 2-[(2R,5Z)-2-carboxy-4-methylthiazol-5(2H)-ylidene]ethyl phosphate + 4-amino-2-methyl-5-(diphosphooxymethyl)pyrimidine + 2 H(+) = thiamine phosphate + CO2 + diphosphate. The enzyme catalyses 2-(2-carboxy-4-methylthiazol-5-yl)ethyl phosphate + 4-amino-2-methyl-5-(diphosphooxymethyl)pyrimidine + 2 H(+) = thiamine phosphate + CO2 + diphosphate. It catalyses the reaction 4-methyl-5-(2-phosphooxyethyl)-thiazole + 4-amino-2-methyl-5-(diphosphooxymethyl)pyrimidine + H(+) = thiamine phosphate + diphosphate. It functions in the pathway cofactor biosynthesis; thiamine diphosphate biosynthesis; thiamine phosphate from 4-amino-2-methyl-5-diphosphomethylpyrimidine and 4-methyl-5-(2-phosphoethyl)-thiazole: step 1/1. Condenses 4-methyl-5-(beta-hydroxyethyl)thiazole monophosphate (THZ-P) and 2-methyl-4-amino-5-hydroxymethyl pyrimidine pyrophosphate (HMP-PP) to form thiamine monophosphate (TMP). In Myxococcus xanthus (strain DK1622), this protein is Thiamine-phosphate synthase.